Consider the following 324-residue polypeptide: Probable cell division protein WhiA (324 aa).

A DNA-binding region (H-T-H motif) is located at residues 276 to 310 (TLKELGEMMQGGKVSKSGINHRLRKIDEFADKLRN).

This sequence belongs to the WhiA family.

In terms of biological role, involved in cell division and chromosome segregation. The chain is Probable cell division protein WhiA from Shouchella clausii (strain KSM-K16) (Alkalihalobacillus clausii).